The following is a 282-amino-acid chain: Ribosomal RNA small subunit methyltransferase A (282 aa).

S-adenosyl-L-methionine contacts are provided by N28, L30, G55, E77, D103, and N122.

The protein belongs to the class I-like SAM-binding methyltransferase superfamily. rRNA adenine N(6)-methyltransferase family. RsmA subfamily.

The protein localises to the cytoplasm. The catalysed reaction is adenosine(1518)/adenosine(1519) in 16S rRNA + 4 S-adenosyl-L-methionine = N(6)-dimethyladenosine(1518)/N(6)-dimethyladenosine(1519) in 16S rRNA + 4 S-adenosyl-L-homocysteine + 4 H(+). Specifically dimethylates two adjacent adenosines (A1518 and A1519) in the loop of a conserved hairpin near the 3'-end of 16S rRNA in the 30S particle. May play a critical role in biogenesis of 30S subunits. The chain is Ribosomal RNA small subunit methyltransferase A from Paracoccus denitrificans (strain Pd 1222).